The primary structure comprises 1054 residues: Carbamoyl phosphate synthase large chain (1054 aa).

A carboxyphosphate synthetic domain region spans residues 1-402; sequence MPRRDDIRSI…SLLKAMASLE (402 aa). Residues Arg129, Arg169, Gly175, Gly176, Arg208, Val210, Glu215, Gly241, Val242, His243, Gln285, and Glu299 each contribute to the ATP site. Positions 133 to 328 constitute an ATP-grasp 1 domain; it reads REAMERIGLR…IAKIAARLAV (196 aa). Mg(2+) contacts are provided by Gln285, Glu299, and Asn301. Mn(2+) contacts are provided by Gln285, Glu299, and Asn301. Residues 403 to 531 form an oligomerization domain region; that stretch reads IETRDIQARL…YYYSTYEQED (129 aa). Residues 532-914 are carbamoyl phosphate synthetic domain; the sequence is EVERGENPSV…AFAKALAAAG (383 aa). The ATP-grasp 2 domain maps to 658-849; that stretch reads GRLLRELGIP…LARLATRVLL (192 aa). ATP contacts are provided by Arg694, Lys733, Glu740, Gly765, Val766, His767, Ser768, Gln808, and Glu820. Mg(2+) is bound by residues Gln808, Glu820, and Asn822. Mn(2+) contacts are provided by Gln808, Glu820, and Asn822. Residues 915–1054 enclose the MGS-like domain; the sequence is QRLPESGRVY…SLQDLYAART (140 aa). Positions 915 to 1054 are allosteric domain; sequence QRLPESGRVY…SLQDLYAART (140 aa).

This sequence belongs to the CarB family. As to quaternary structure, composed of two chains; the small (or glutamine) chain promotes the hydrolysis of glutamine to ammonia, which is used by the large (or ammonia) chain to synthesize carbamoyl phosphate. Tetramer of heterodimers (alpha,beta)4. The cofactor is Mg(2+). It depends on Mn(2+) as a cofactor.

It carries out the reaction hydrogencarbonate + L-glutamine + 2 ATP + H2O = carbamoyl phosphate + L-glutamate + 2 ADP + phosphate + 2 H(+). The catalysed reaction is hydrogencarbonate + NH4(+) + 2 ATP = carbamoyl phosphate + 2 ADP + phosphate + 2 H(+). It functions in the pathway amino-acid biosynthesis; L-arginine biosynthesis; carbamoyl phosphate from bicarbonate: step 1/1. It participates in pyrimidine metabolism; UMP biosynthesis via de novo pathway; (S)-dihydroorotate from bicarbonate: step 1/3. Its function is as follows. Large subunit of the glutamine-dependent carbamoyl phosphate synthetase (CPSase). CPSase catalyzes the formation of carbamoyl phosphate from the ammonia moiety of glutamine, carbonate, and phosphate donated by ATP, constituting the first step of 2 biosynthetic pathways, one leading to arginine and/or urea and the other to pyrimidine nucleotides. The large subunit (synthetase) binds the substrates ammonia (free or transferred from glutamine from the small subunit), hydrogencarbonate and ATP and carries out an ATP-coupled ligase reaction, activating hydrogencarbonate by forming carboxy phosphate which reacts with ammonia to form carbamoyl phosphate. The chain is Carbamoyl phosphate synthase large chain from Rubrobacter xylanophilus (strain DSM 9941 / JCM 11954 / NBRC 16129 / PRD-1).